The primary structure comprises 387 residues: Solute carrier family 25 protein Shawn (387 aa).

3 Solcar repeats span residues 37 to 156, 179 to 263, and 269 to 366; these read IRPL…FKAR, IPFL…LKSS, and PTFS…GKSF. 6 helical membrane passes run 43-63, 128-148, 179-199, 235-255, 275-295, and 337-357; these read VASACTGAMVTACFMTPLDVI, LWSGLSPTLISALPSTIIYFV, IPFLVPLLAGVSGRILAVTCV, LWRGLPPTILRDVPFSGIYWT, FAAGAISGSVAATITTPFDVV, and AIFSGLGPRLFKVAPACAIMI.

The protein belongs to the mitochondrial carrier (TC 2.A.29) family.

The protein localises to the mitochondrion inner membrane. In terms of biological role, mitochondrial transporter required for glutathione import into mitochondria. This Drosophila melanogaster (Fruit fly) protein is Solute carrier family 25 protein Shawn.